A 64-amino-acid polypeptide reads, in one-letter code: DNA gyrase inhibitor YacG (64 aa).

Positions 9, 12, 28, and 32 each coordinate Zn(2+).

This sequence belongs to the DNA gyrase inhibitor YacG family. As to quaternary structure, interacts with GyrB. It depends on Zn(2+) as a cofactor.

In terms of biological role, inhibits all the catalytic activities of DNA gyrase by preventing its interaction with DNA. Acts by binding directly to the C-terminal domain of GyrB, which probably disrupts DNA binding by the gyrase. This chain is DNA gyrase inhibitor YacG, found in Enterobacter sp. (strain 638).